The sequence spans 269 residues: Ribonuclease HII (269 aa).

Residues 83–269 (YLIAGVDEVG…HRMSFLTNIL (187 aa)) form the RNase H type-2 domain. A divalent metal cation-binding residues include D89, E90, and D185.

It belongs to the RNase HII family. Mn(2+) is required as a cofactor. Requires Mg(2+) as cofactor.

The protein localises to the cytoplasm. It carries out the reaction Endonucleolytic cleavage to 5'-phosphomonoester.. Endonuclease that specifically degrades the RNA of RNA-DNA hybrids. The chain is Ribonuclease HII from Clostridium botulinum (strain Loch Maree / Type A3).